We begin with the raw amino-acid sequence, 348 residues long: Sulfate/thiosulfate import ATP-binding protein CysA (348 aa).

In terms of domain architecture, ABC transporter spans 3 to 233 (ILIDNISKKF…PATPFVFSLL (231 aa)). 35–42 (GPSGSGKS) is an ATP binding site.

This sequence belongs to the ABC transporter superfamily. Sulfate/tungstate importer (TC 3.A.1.6) family.

The protein localises to the plastid. Its subcellular location is the chloroplast. The enzyme catalyses sulfate(out) + ATP + H2O = sulfate(in) + ADP + phosphate + H(+). It carries out the reaction thiosulfate(out) + ATP + H2O = thiosulfate(in) + ADP + phosphate + H(+). Its function is as follows. Part of the ABC transporter complex involved in sulfate/thiosulfate import. Responsible for energy coupling to the transport system. This chain is Sulfate/thiosulfate import ATP-binding protein CysA, found in Mesostigma viride (Green alga).